The primary structure comprises 357 residues: Probable glutamine amidotransferase DUG3 (357 aa).

C2 serves as the catalytic For GATase activity. The region spanning 2-260 (CRFLIFKGKQ…PGEYRVERLD (259 aa)) is the Glutamine amidotransferase type-2 domain.

It belongs to the DUG3 family. Component of the GSH degradosomal complex composed of at least DUG1, DUG2 and DUG3.

The protein localises to the cytoplasm. Component of the GSH degradosomal complex involved in the degradation of glutathione (GSH) and other peptides containing a gamma-glu-X bond. The protein is Probable glutamine amidotransferase DUG3 (DUG3) of Saccharomyces cerevisiae (strain ATCC 204508 / S288c) (Baker's yeast).